A 455-amino-acid chain; its full sequence is Adenylyltransferase and sulfurtransferase UBA4 (455 aa).

Residues Gly93, Asp114, Ser121–Arg125, Lys138, and Asp182–His183 contribute to the ATP site. Zn(2+) is bound by residues Cys224 and Cys227. Cys241 functions as the Glycyl thioester intermediate; for adenylyltransferase activity in the catalytic mechanism. Zn(2+) contacts are provided by Cys302 and Cys305. The 99-residue stretch at Gln355–Pro453 folds into the Rhodanese domain. Residue Cys413 is the Cysteine persulfide intermediate; for sulfurtransferase activity of the active site.

This sequence in the N-terminal section; belongs to the HesA/MoeB/ThiF family. UBA4 subfamily. Requires Zn(2+) as cofactor.

The protein resides in the cytoplasm. The protein localises to the cytosol. It functions in the pathway tRNA modification; 5-methoxycarbonylmethyl-2-thiouridine-tRNA biosynthesis. Functionally, plays a central role in 2-thiolation of mcm(5)S(2)U at tRNA wobble positions of cytosolic tRNA(Lys), tRNA(Glu) and tRNA(Gln). Acts by mediating the C-terminal thiocarboxylation of sulfur carrier URM1. Its N-terminus first activates URM1 as acyl-adenylate (-COAMP), then the persulfide sulfur on the catalytic cysteine is transferred to URM1 to form thiocarboxylation (-COSH) of its C-terminus. The reaction probably involves hydrogen sulfide that is generated from the persulfide intermediate and that acts as a nucleophile towards URM1. Subsequently, a transient disulfide bond is formed. Does not use thiosulfate as sulfur donor; NFS1 probably acting as a sulfur donor for thiocarboxylation reactions. Prior mcm(5) tRNA modification by the elongator complex is required for 2-thiolation. May also be involved in protein urmylation. The sequence is that of Adenylyltransferase and sulfurtransferase UBA4 from Lodderomyces elongisporus (strain ATCC 11503 / CBS 2605 / JCM 1781 / NBRC 1676 / NRRL YB-4239) (Yeast).